The primary structure comprises 295 residues: MNERLQFVVVTGMSGAGKTVAMQSFEDLGFFCVDNMPPALLPKFWELIKENGKISKVALVVDLRSRGFYDQILGLLTGEEEQHNIKTDVVFLDATDEELVARYKETRRAHPLAMDGRVADGVRKERELLSPIKSEAQIVIDTTNMTPRELRSDIFGHFSTNKTIPKFHIEVVSFGYKYGSPIDADIIMDVRFLPNPYYVTELKNKIGTDPAVYDYVMNQPATEEFYTDYLKLLMDIMPGYQKEGKSNLTIAIGCTGGQHRSVAIAERLAKDLSKKYVTNISHRDAHKRKETVNRS.

12–19 (GMSGAGKT) is an ATP binding site. Residue 62 to 65 (DLRS) participates in GTP binding.

Belongs to the RapZ-like family.

Functionally, displays ATPase and GTPase activities. The chain is Nucleotide-binding protein PEPE_0450 from Pediococcus pentosaceus (strain ATCC 25745 / CCUG 21536 / LMG 10740 / 183-1w).